The following is a 359-amino-acid chain: 3-dehydroquinate synthase (359 aa).

NAD(+) contacts are provided by residues 71–76 (DGEAHK), 105–109 (GVIGD), 129–130 (TT), Lys142, Lys151, and 169–172 (TLHT). 3 residues coordinate Zn(2+): Glu184, His247, and His264.

It belongs to the sugar phosphate cyclases superfamily. Dehydroquinate synthase family. The cofactor is Co(2+). Zn(2+) serves as cofactor. Requires NAD(+) as cofactor.

It is found in the cytoplasm. It carries out the reaction 7-phospho-2-dehydro-3-deoxy-D-arabino-heptonate = 3-dehydroquinate + phosphate. Its pathway is metabolic intermediate biosynthesis; chorismate biosynthesis; chorismate from D-erythrose 4-phosphate and phosphoenolpyruvate: step 2/7. In terms of biological role, catalyzes the conversion of 3-deoxy-D-arabino-heptulosonate 7-phosphate (DAHP) to dehydroquinate (DHQ). The polypeptide is 3-dehydroquinate synthase (Neisseria gonorrhoeae (strain ATCC 700825 / FA 1090)).